Reading from the N-terminus, the 241-residue chain is Small ribosomal subunit protein uS3 (241 aa).

In terms of domain architecture, KH type-2 spans 39 to 108; the sequence is IREGVLKLLK…NLKVEVKVIE (70 aa). Residues 215-241 are disordered; the sequence is SQRVSEKAPMNNDRRFNNKNNNRGGRK. Positions 232–241 are enriched in low complexity; it reads NKNNNRGGRK.

The protein belongs to the universal ribosomal protein uS3 family. In terms of assembly, part of the 30S ribosomal subunit. Forms a tight complex with proteins S10 and S14.

In terms of biological role, binds the lower part of the 30S subunit head. Binds mRNA in the 70S ribosome, positioning it for translation. The chain is Small ribosomal subunit protein uS3 from Mesoplasma florum (Acholeplasma florum).